The primary structure comprises 136 residues: Large ribosomal subunit protein eL27 (136 aa).

The region spanning 5-36 (MKPGKVVLVLRGKYAGRKAVVVKQQDEGVSDR) is the KOW domain.

The protein belongs to the eukaryotic ribosomal protein eL27 family. In terms of assembly, component of the large ribosomal subunit.

The protein localises to the cytoplasm. It localises to the cytosol. Its subcellular location is the rough endoplasmic reticulum. Functionally, component of the large ribosomal subunit. In Caenorhabditis elegans, this protein is Large ribosomal subunit protein eL27 (rpl-27).